We begin with the raw amino-acid sequence, 242 residues long: Large ribosomal subunit protein uL2 (242 aa).

The disordered stretch occupies residues 201-242 (VDHPFGGGRHQHTGKPTTVSRKKVPPGRKVGHISARRTGVRK). Residues 220-242 (SRKKVPPGRKVGHISARRTGVRK) are compositionally biased toward basic residues.

Belongs to the universal ribosomal protein uL2 family. In terms of assembly, part of the 50S ribosomal subunit. Forms a bridge to the 30S subunit in the 70S ribosome.

Its function is as follows. One of the primary rRNA binding proteins. Required for association of the 30S and 50S subunits to form the 70S ribosome, for tRNA binding and peptide bond formation. It has been suggested to have peptidyltransferase activity; this is somewhat controversial. Makes several contacts with the 16S rRNA in the 70S ribosome. The chain is Large ribosomal subunit protein uL2 from Methanocaldococcus jannaschii (strain ATCC 43067 / DSM 2661 / JAL-1 / JCM 10045 / NBRC 100440) (Methanococcus jannaschii).